A 335-amino-acid chain; its full sequence is Trans-1,2-dihydrobenzene-1,2-diol dehydrogenase (335 aa).

Belongs to the Gfo/Idh/MocA family. As to quaternary structure, homodimer.

The enzyme catalyses (1R,2R)-1,2-dihydrobenzene-1,2-diol + NADP(+) = catechol + NADPH + H(+). It catalyses the reaction D-xylose + NADP(+) = D-xylono-1,5-lactone + NADPH + H(+). The chain is Trans-1,2-dihydrobenzene-1,2-diol dehydrogenase (DHDH) from Bos taurus (Bovine).